Here is an 858-residue protein sequence, read N- to C-terminus: Potassium transporter 7 (858 aa).

Composition is skewed to acidic residues over residues 1-16 (MAEE…EEID) and 38-53 (QDDD…DNDG). Positions 1–68 (MAEESSMEGS…LESDEDEIPE (68 aa)) are disordered. Residues 1–104 (MAEESSMEGS…DYEDLTVGRK (104 aa)) are Cytoplasmic-facing. Residues 105–125 (VLLAFQTLGVVFGDVGTSPLY) traverse the membrane as a helical segment. The Extracellular segment spans residues 126–147 (TFSVMFSKSPVQEKEDVIGALS). The chain crosses the membrane as a helical span at residues 148–168 (LVLYTLLLVPLIKYVLVVLWA). The Cytoplasmic portion of the chain corresponds to 169–232 (NDDGEGGTFA…KLENSLILKK (64 aa)). A helical transmembrane segment spans residues 233-253 (ILLVLVLAGTSMVIADGVVTP). Topologically, residues 254–269 (AMSVMSAVGGLKVGVD) are extracellular. Residues 270–290 (VVEQDQVVMISVAFLVILFSL) traverse the membrane as a helical segment. Over 291–297 (QKYGTSK) the chain is Cytoplasmic. Residues 298-318 (MGLVVGPALLIWFCSLAGIGI) form a helical membrane-spanning segment. Topologically, residues 319-345 (YNLIKYDSSVYRAFNPVHIYYFFKRNS) are extracellular. Residues 346 to 366 (INAWYALGGCILCATGSEALF) traverse the membrane as a helical segment. The Cytoplasmic segment spans residues 367 to 380 (ADLCYFSVRSVQLT). A helical transmembrane segment spans residues 381-401 (FVCLVLPCLMLGYMGQAAYLM). The Extracellular segment spans residues 402 to 413 (ENHADASQAFFS). The helical transmembrane segment at 414–434 (SVPGSAFWPVLFIANIAALIA) threads the bilayer. The Cytoplasmic segment spans residues 435–470 (SRTMTTATFSCIKQSTALGCFPRLKIIHTSRKFMGQ). The helical transmembrane segment at 471 to 491 (IYIPVLNWFLLAVCLVVVCSI) threads the bilayer. Residues 492 to 496 (SSIDE) are Extracellular-facing. The helical transmembrane segment at 497 to 517 (IGNAYGMAELGVMMTTTILVT) threads the bilayer. Position 518 (L518) is a topological domain, cytoplasmic. The chain crosses the membrane as a helical span at residues 519–539 (IMLLIWQINIVIVIAFLVVFL). The Extracellular segment spans residues 540–552 (GVELVFFSSVIAS). The helical transmembrane segment at 553–573 (VGDGSWIILVFAVIMFGIMYI) threads the bilayer. At 574–858 (WNYGSKLRYE…LMQVGMTYMV (285 aa)) the chain is on the cytoplasmic side. The interval 707–731 (QERSLESDGNDDSDSEEDFPGSRVV) is disordered. Residues 714–725 (DGNDDSDSEEDF) are compositionally biased toward acidic residues. 2 positions are modified to phosphoserine: S719 and S721.

Belongs to the HAK/KUP transporter (TC 2.A.72.3) family.

It localises to the cell membrane. Probable potassium transporter. The sequence is that of Potassium transporter 7 (POT7) from Arabidopsis thaliana (Mouse-ear cress).